A 272-amino-acid chain; its full sequence is Shikimate dehydrogenase (NADP(+)) (272 aa).

Residues 14-16 (SKS) and T61 contribute to the shikimate site. K65 functions as the Proton acceptor in the catalytic mechanism. E77 contacts NADP(+). Residues N86 and D102 each coordinate shikimate. Residues 126–130 (GAGGA), 149–154 (NRTVSR), and M213 contribute to the NADP(+) site. Y215 contacts shikimate. G237 provides a ligand contact to NADP(+).

The protein belongs to the shikimate dehydrogenase family. As to quaternary structure, homodimer.

The catalysed reaction is shikimate + NADP(+) = 3-dehydroshikimate + NADPH + H(+). Its pathway is metabolic intermediate biosynthesis; chorismate biosynthesis; chorismate from D-erythrose 4-phosphate and phosphoenolpyruvate: step 4/7. In terms of biological role, involved in the biosynthesis of the chorismate, which leads to the biosynthesis of aromatic amino acids. Catalyzes the reversible NADPH linked reduction of 3-dehydroshikimate (DHSA) to yield shikimate (SA). The protein is Shikimate dehydrogenase (NADP(+)) of Shigella flexneri serotype 5b (strain 8401).